We begin with the raw amino-acid sequence, 377 residues long: Carbamoyl phosphate synthase small chain (377 aa).

Residues 1–186 are CPSase; that stretch reads MSTPALLVLA…LGKGFVTPDE (186 aa). 3 residues coordinate L-glutamine: Ser-47, Gly-238, and Gly-240. Residues 190–377 enclose the Glutamine amidotransferase type-1 domain; that stretch reads HVVAYDFGVK…IGNMKAAKRA (188 aa). The Nucleophile role is filled by Cys-266. Positions 267, 270, 308, 310, and 311 each coordinate L-glutamine. Active-site residues include His-350 and Glu-352.

It belongs to the CarA family. As to quaternary structure, composed of two chains; the small (or glutamine) chain promotes the hydrolysis of glutamine to ammonia, which is used by the large (or ammonia) chain to synthesize carbamoyl phosphate. Tetramer of heterodimers (alpha,beta)4.

It carries out the reaction hydrogencarbonate + L-glutamine + 2 ATP + H2O = carbamoyl phosphate + L-glutamate + 2 ADP + phosphate + 2 H(+). The catalysed reaction is L-glutamine + H2O = L-glutamate + NH4(+). It functions in the pathway amino-acid biosynthesis; L-arginine biosynthesis; carbamoyl phosphate from bicarbonate: step 1/1. Its pathway is pyrimidine metabolism; UMP biosynthesis via de novo pathway; (S)-dihydroorotate from bicarbonate: step 1/3. Small subunit of the glutamine-dependent carbamoyl phosphate synthetase (CPSase). CPSase catalyzes the formation of carbamoyl phosphate from the ammonia moiety of glutamine, carbonate, and phosphate donated by ATP, constituting the first step of 2 biosynthetic pathways, one leading to arginine and/or urea and the other to pyrimidine nucleotides. The small subunit (glutamine amidotransferase) binds and cleaves glutamine to supply the large subunit with the substrate ammonia. The protein is Carbamoyl phosphate synthase small chain of Neisseria meningitidis serogroup B (strain ATCC BAA-335 / MC58).